Consider the following 199-residue polypeptide: MKQSHFFAHLSRMKLINRWPLMRNVRTENVSEHSLQVAMVAHALAAIKNRKFGGQLNAERIALLAMYHDASEVLTGDLPTPVKYFNSQIAQEYKAIEKIAQQKLVDMAPDELHDIFAPLIDENAWSKEEQAIVKQADALCAYLKCLEELSAGNNEFRLAKTRLEKTLELRRSQEMDYFMAVFVPSFHLSLDEISQDSPL.

Substrate contacts are provided by residues 18-19 (RW) and histidine 33. The HD domain occupies 30 to 142 (VSEHSLQVAM…VKQADALCAY (113 aa)). A divalent metal cation contacts are provided by histidine 33, histidine 68, and aspartate 69. Substrate-binding positions include aspartate 69, 77-80 (DLPT), and aspartate 137. Aspartate 137 is a binding site for a divalent metal cation.

This sequence belongs to the 5DNU family. Homodimer. Requires a divalent metal cation as cofactor.

The protein localises to the cytoplasm. The enzyme catalyses a 2'-deoxyribonucleoside 5'-phosphate + H2O = a 2'-deoxyribonucleoside + phosphate. Catalyzes the strictly specific dephosphorylation of 2'-deoxyribonucleoside 5'-monophosphates. This chain is 5'-deoxynucleotidase YfbR, found in Salmonella typhi.